The sequence spans 551 residues: TRAF3-interacting JNK-activating modulator (551 aa).

The Cytoplasmic segment spans residues methionine 1–arginine 526. Disordered stretches follow at residues leucine 73–glutamine 95 and aspartate 140–aspartate 178. Coiled coils occupy residues aspartate 240–lysine 436 and tryptophan 464–glutamine 506. A helical; Anchor for type IV membrane protein transmembrane segment spans residues tryptophan 527–alanine 544. Topologically, residues asparagine 545–isoleucine 551 are extracellular.

In terms of assembly, interacts (via its coiled-coil domain) with TRAF3 (via isoleucine zipper). Interacts with MAP2K1. Interacts with PPP2CA; this interaction targets PPP2CA to the lysosomes. Interacts with TLR4. Interacts with MAVS. Interacts with TBK1.

The protein localises to the cell membrane. Its subcellular location is the golgi apparatus membrane. The protein resides in the lysosome membrane. It localises to the mitochondrion outer membrane. Functionally, adapter protein that plays essential roles in both innate and adaptive immunity. Plays a crucial role in the regulation of thymocyte development. Mechanistically, mediates TCR-stimulated activation through recruiting MAP2K1/MEK1 to the Golgi and, thereby, facilitating the interaction of MAP2K1/MEK1 with its activator BRAF. Also plays an essential role in regulatory T-cell stability and function by recruiting the serine-threonine phosphatase catalytic subunit (PPP2CA) to the lysosome, thereby facilitating the interaction of PP2Ac with the mTORC1 component RPTOR and restricting glycolytic metabolism. Positively regulates TLR4 signaling activity in macrophage-mediated inflammation by acting as a molecular clamp to facilitate LPS-induced translocation of TLR4 to lipid rafts. In response to viral infection, facilitates the recruitment of TRAF3 to MAVS within mitochondria leading to IRF3 activation and interferon production. However, participates in the maintenance of immune homeostasis and the prevention of overzealous innate immunity by promoting 'Lys-48'-dependent ubiquitination of TBK1. This chain is TRAF3-interacting JNK-activating modulator (TRAF3IP3), found in Homo sapiens (Human).